We begin with the raw amino-acid sequence, 884 residues long: Probable mixed-linked glucan synthase 9 (884 aa).

Residues 1-27 (MALSPAAAGRTGRNNNNDAGLADPLLP) are compositionally biased toward low complexity. The segment at 1-34 (MALSPAAAGRTGRNNNNDAGLADPLLPAGGGGGG) is disordered. The next 2 membrane-spanning stretches (helical) occupy residues 73–93 (VLLH…VLFL) and 104–124 (AMWL…TWLL). Residue D195 is part of the active site. Substrate-binding residues include D396 and D398. Residue D565 is part of the active site. The next 6 helical transmembrane spans lie at 640-660 (TAYP…VIWL), 672-692 (FSTY…IGLV), 708-728 (EQFY…HIVL), 765-785 (LLAP…AAAG), 802-822 (AGLV…LGIM), and 830-850 (CALF…FVAV).

Belongs to the glycosyltransferase 2 family. Plant cellulose synthase-like F subfamily.

The protein resides in the golgi apparatus membrane. Its function is as follows. May catalyze both beta-1,3 and beta-1,4 glycosidic linkage on beta-D-glucan. Essential for (1,3;1,4)-beta-D-glucans synthesis in grasses and cereals (Poaceae). The mixed-linked glucans (which are not present in walls of dicotyledons or most other monocotyledonous plants) are particularly important constituents of the walls of the starchy endosperm and aleurone cells of cereal grains such as oats, wheat, rice and barley. They can account for up to 70% by weight of the wall. This chain is Probable mixed-linked glucan synthase 9 (CSLF9), found in Oryza sativa subsp. japonica (Rice).